A 154-amino-acid chain; its full sequence is Endoribonuclease YbeY (154 aa).

Positions 118, 122, and 128 each coordinate Zn(2+).

This sequence belongs to the endoribonuclease YbeY family. It depends on Zn(2+) as a cofactor.

The protein localises to the cytoplasm. Functionally, single strand-specific metallo-endoribonuclease involved in late-stage 70S ribosome quality control and in maturation of the 3' terminus of the 16S rRNA. This chain is Endoribonuclease YbeY, found in Chloroflexus aurantiacus (strain ATCC 29366 / DSM 635 / J-10-fl).